Reading from the N-terminus, the 144-residue chain is Small ribosomal subunit protein eS12y (144 aa).

Ser2 carries the post-translational modification N-acetylserine.

It belongs to the eukaryotic ribosomal protein eS12 family.

This Arabidopsis thaliana (Mouse-ear cress) protein is Small ribosomal subunit protein eS12y (RPS12C).